Reading from the N-terminus, the 226-residue chain is Transcription repressor OFP12 (226 aa).

The segment covering 68–87 (SSTFTASTSTAANSSSSSAS) has biased composition (low complexity). The interval 68-104 (SSTFTASTSTAANSSSSSASYDDSDNYGFAPDDDSPP) is disordered. Residues 152–217 (VKHYVQSPDP…IRAFADILVS (66 aa)) form the OVATE domain.

Interacts with KNAT1, KNAT2, KNAT3 and KNAT4. As to expression, expressed in roots, shoots, stems, flower buds and siliques.

It localises to the nucleus. Its function is as follows. Transcriptional repressor that regulates multiple aspects of plant growth and development through the regulation of BEL1-LIKE (BLH) and KNOX TALE (KNAT) homeodomain transcription factors. The polypeptide is Transcription repressor OFP12 (OFP12) (Arabidopsis thaliana (Mouse-ear cress)).